Reading from the N-terminus, the 148-residue chain is Protein Turandot Z (148 aa).

The signal sequence occupies residues 1–23; that stretch reads MYFAIRLSFVLAVLFCLTGNGSA.

It belongs to the Turandot family.

Its subcellular location is the secreted. Functionally, a humoral factor that may play a role in stress tolerance. In Drosophila sechellia (Fruit fly), this protein is Protein Turandot Z.